Here is a 372-residue protein sequence, read N- to C-terminus: Geranylgeranyl pyrophosphate synthase 4 (372 aa).

The signal sequence occupies residues 1 to 22 (MEAQNIFLYLLIVFLSLHFVFT). Isopentenyl diphosphate-binding residues include lysine 121, arginine 124, and histidine 153. Positions 160 and 166 each coordinate Mg(2+). Arginine 171 provides a ligand contact to dimethylallyl diphosphate. Arginine 172 contributes to the isopentenyl diphosphate binding site. Dimethylallyl diphosphate-binding residues include lysine 257, threonine 258, glutamine 295, lysine 312, and lysine 322.

This sequence belongs to the FPP/GGPP synthase family. As to quaternary structure, monomer. It depends on Mg(2+) as a cofactor. In terms of tissue distribution, faintly expressed in flowers. Expressed in roots and siliques.

Its subcellular location is the endoplasmic reticulum. The catalysed reaction is isopentenyl diphosphate + dimethylallyl diphosphate = (2E)-geranyl diphosphate + diphosphate. It catalyses the reaction isopentenyl diphosphate + (2E)-geranyl diphosphate = (2E,6E)-farnesyl diphosphate + diphosphate. The enzyme catalyses isopentenyl diphosphate + (2E,6E)-farnesyl diphosphate = (2E,6E,10E)-geranylgeranyl diphosphate + diphosphate. It participates in isoprenoid biosynthesis; farnesyl diphosphate biosynthesis; farnesyl diphosphate from geranyl diphosphate and isopentenyl diphosphate: step 1/1. Its pathway is isoprenoid biosynthesis; geranyl diphosphate biosynthesis; geranyl diphosphate from dimethylallyl diphosphate and isopentenyl diphosphate: step 1/1. It functions in the pathway isoprenoid biosynthesis; geranylgeranyl diphosphate biosynthesis; geranylgeranyl diphosphate from farnesyl diphosphate and isopentenyl diphosphate: step 1/1. Catalyzes the trans-addition of the three molecules of isopentenyl diphosphate (IPP) onto dimethylallyl diphosphate (DMAPP) to form geranylgeranyl diphosphate. The protein is Geranylgeranyl pyrophosphate synthase 4 of Arabidopsis thaliana (Mouse-ear cress).